We begin with the raw amino-acid sequence, 80 residues long: Myrmicitoxin(1)-Pr1a (80 aa).

The N-terminal stretch at Met1–Ala23 is a signal peptide. A propeptide spanning residues Thr24–Pro57 is cleaved from the precursor. Phe79 is modified (phenylalanine amide).

It belongs to the formicidae venom clade 1 family. In terms of tissue distribution, expressed by the venom gland.

It is found in the secreted. Functionally, vertebrate-selective toxin that causes pain by targeting voltage-gated sodium channels. In Pogonomyrmex rugosus (Desert harvester ant), this protein is Myrmicitoxin(1)-Pr1a.